The primary structure comprises 243 residues: MNTTVNILLGELIGTMVLIILGNGVCASVNYKNMFAKQVGANWLLIALGWGFAVFCGVVISIQVLKGNANLNPAVTVYFMINQKGANIGLLFAMIAMQLLGAMIAQIILNSLNWKHIIENDAEMLKASSCTGPSHRKAWFRNISYEMLGTMILLAGVMAGDYHKLTGVFFVMAIVMSLGSVTGCAINPARDFGPRVIYFLTAKAFNKKLQNPVSADFRYGLVPLLAPIAAGLIMGGFSLLINQ.

2 helical membrane-spanning segments follow: residues 7–27 and 44–64; these read ILLG…GVCA and LLIA…SIQV. The NPA 1 signature appears at 72-74; the sequence is NPA. A run of 3 helical transmembrane segments spans residues 88 to 108, 143 to 163, and 166 to 186; these read IGLL…AQII, ISYE…GDYH, and TGVF…GCAI. The short motif at 187–189 is the NPA 2 element; that stretch reads NPA. The chain crosses the membrane as a helical span at residues 221–241; sequence LVPLLAPIAAGLIMGGFSLLI.

It belongs to the MIP/aquaporin (TC 1.A.8) family.

Its subcellular location is the cell membrane. The enzyme catalyses glycerol(in) = glycerol(out). In terms of biological role, mediates glycerol diffusion across the cytoplasmic membrane via a pore-type mechanism. In Mycoplasmoides gallisepticum (strain R(low / passage 15 / clone 2)) (Mycoplasma gallisepticum), this protein is Probable glycerol uptake facilitator protein (glpF).